Here is an 84-residue protein sequence, read N- to C-terminus: Envelope small membrane protein (84 aa).

At 1 to 18 (MFMADAYLADTVWYVGQI) the chain is on the virion surface side. The helical transmembrane segment at 19–39 (IFIVAICLLVIIVVVAFLATF) threads the bilayer. At 40–80 (KLCIQLCGMCNTLVLSPSIYVFNRGRQFYEFYNDVKPPVLD) the chain is on the intravirion side.

It belongs to the betacoronaviruses E protein family. As to quaternary structure, homopentamer. Interacts with membrane protein M in the budding compartment of the host cell, which is located between endoplasmic reticulum and the Golgi complex. Interacts with Nucleoprotein.

Its subcellular location is the host Golgi apparatus membrane. Functionally, plays a central role in virus morphogenesis and assembly. Acts as a viroporin and self-assembles in host membranes forming pentameric protein-lipid pores that allow ion transport. Also plays a role in the induction of apoptosis. The protein is Envelope small membrane protein of Porcine hemagglutinating encephalomyelitis virus (strain 67N) (HEV-67N).